Here is a 1247-residue protein sequence, read N- to C-terminus: E3 ubiquitin-protein ligase hecw-1 (1247 aa).

One can recognise a WW 1 domain in the interval 602–635; it reads TPPESHWKTYLDAKKRKFYVNHVTKETRWTKPDT. Positions 633-659 are disordered; sequence PDTLNNNHIEPETPVHKRLSDRSASPR. The segment covering 641–653 has biased composition (basic and acidic residues); the sequence is IEPETPVHKRLSD. One can recognise a WW 2 domain in the interval 745-777; that stretch reads QPLPSGWECITMNNRTVFLNHANKETSFYDPRI. Positions 914–1247 constitute an HECT domain; it reads DPFVLKKSRL…IVNGMSYSIE (334 aa). Cys-1215 acts as the Glycyl thioester intermediate in catalysis.

As to expression, expressed in the nervous system throughout the body. In the anterior ganglion, expression is limited to the two lateral outer labial neurons OLLL and OLLR.

The protein localises to the cytoplasm. It catalyses the reaction S-ubiquitinyl-[E2 ubiquitin-conjugating enzyme]-L-cysteine + [acceptor protein]-L-lysine = [E2 ubiquitin-conjugating enzyme]-L-cysteine + N(6)-ubiquitinyl-[acceptor protein]-L-lysine.. It participates in protein modification; protein ubiquitination. In terms of biological role, E3 ubiquitin-protein ligase. Functions in the OLL neurons in the anterior ganglion to inhibit avoidance to microbial pathogens such as P.aeruginosa although worms do display avoidance behavior, vacating a P.aeruginosa lawn within 24 hours. Likely to act by inhibiting the neuropeptide receptor npr-1. This chain is E3 ubiquitin-protein ligase hecw-1, found in Caenorhabditis elegans.